The chain runs to 149 residues: Deoxyuridine 5'-triphosphate nucleotidohydrolase (149 aa).

Residues 65 to 67 (RSG), Asn-78, 82 to 84 (TID), and Lys-92 contribute to the substrate site.

This sequence belongs to the dUTPase family. Mg(2+) is required as a cofactor.

The catalysed reaction is dUTP + H2O = dUMP + diphosphate + H(+). It participates in pyrimidine metabolism; dUMP biosynthesis; dUMP from dCTP (dUTP route): step 2/2. In terms of biological role, this enzyme is involved in nucleotide metabolism: it produces dUMP, the immediate precursor of thymidine nucleotides and it decreases the intracellular concentration of dUTP so that uracil cannot be incorporated into DNA. The protein is Deoxyuridine 5'-triphosphate nucleotidohydrolase of Chlorobium chlorochromatii (strain CaD3).